Here is a 366-residue protein sequence, read N- to C-terminus: Zinc finger protein ubi-d4 B (366 aa).

2 disordered regions span residues 41–94 and 140–167; these read ASAP…DGSS and DDLDDEDYEEDTPKRRKGKSKGKGIGGA. The segment covering 76–86 has biased composition (basic and acidic residues); that stretch reads PDPEQMLKKEG. The segment covering 140–149 has biased composition (acidic residues); the sequence is DDLDDEDYEE. The C2H2-type zinc finger occupies 183–206; it reads YACDICGKRYKNRPGLSYHYAHSH. Residues 211–243 are disordered; sequence EGAGAEDKEDSQPPTPIMHRSEEQKSKKGPDGL. The span at 229 to 240 shows a compositional bias: basic and acidic residues; it reads HRSEEQKSKKGP. PHD-type zinc fingers lie at residues 247 to 307 and 304 to 354; these read NNYC…CKCC and CKCC…CLDL.

It belongs to the requiem/DPF family.

It is found in the cytoplasm. The protein localises to the nucleus. In terms of biological role, may be a transcription factor required for the apoptosis response following survival factor withdrawal from myeloid cells. Might also have a role in the development and maturation of lymphoid cells. The polypeptide is Zinc finger protein ubi-d4 B (req-b) (Xenopus laevis (African clawed frog)).